The chain runs to 513 residues: Tigger transposable element-derived protein 4 (513 aa).

The region spanning Pro-12 to Val-63 is the HTH psq-type domain. 2 DNA-binding regions (H-T-H motif) span residues Lys-39–Asn-59 and Pro-108–Arg-139. Residues Lys-75–Ala-146 enclose the HTH CENPB-type domain. In terms of domain architecture, DDE-1 spans Tyr-174–Tyr-375. Residues Thr-433–Glu-448 are compositionally biased toward basic and acidic residues. Residues Thr-433–Lys-473 are disordered.

The protein belongs to the tigger transposable element derived protein family.

It is found in the nucleus. The sequence is that of Tigger transposable element-derived protein 4 (Tigd4) from Mus musculus (Mouse).